A 757-amino-acid polypeptide reads, in one-letter code: Protein ALTERED SEED GERMINATION 2 (757 aa).

WD repeat units follow at residues 6–43 (FHDGNIFNLLHTRSQDPSHEVDQRMQFHSSLVRRLSQE), 48–87 (GHQGCVNALAWNSNGSLLISGSDDLRINIWNYSSRKLLHS), 91–132 (GHTA…GRAE), 145–185 (CHTR…SCPP), 213–253 (KQTL…PLAS), and 277–316 (RTNLHLTHVTFSPNGEEVLLSYSGEHVYLMNVNNGICSTG). The short motif at 245–257 (RRMLPPLASSRKR) is the Nuclear localization signal element. The stretch at 442 to 475 (FKAHYYMSEALQQLGKCKEALDFATAAQHMNPSD) is one TPR repeat. The disordered stretch occupies residues 519 to 601 (ANSDSSHDMS…SSSQNDRTSY (83 aa)). The span at 523-532 (SSHDMSRSER) shows a compositional bias: basic and acidic residues. The span at 533–543 (EDSDYDEELEL) shows a compositional bias: acidic residues. The segment covering 582–601 (TVDNASSGTASSSQNDRTSY) has biased composition (polar residues). WD repeat units follow at residues 618–658 (NVGT…LMKV) and 661–700 (GDESVLNCIQCHPFDSVVATSGIDNTIKIWSPTASVPSIV). Cys-754 carries the S-12-hydroxyfarnesyl cysteine; by FTB/ERA1 lipid modification.

Interacts with DDB1; the subcellular localization of this complex depends on farnesylation status. Binds to HDA9 in the cytosol when farnesylated. In terms of processing, farnesylated at Cys-754 by FTB/ERA1; this modification triggers an exclusion from the nucleus.

It is found in the nucleus. Its subcellular location is the cytoplasm. It localises to the cytosol. The protein operates within protein modification; protein ubiquitination. May function as a substrate adapter for CUL4-DDB1 E3 ubiquitin-protein ligase complex. Negative regulator of fatty acid biosynthetic process and accumulation. Acts as an abscisic acid (ABA) negative regulator. Involved in responses to salt (NaCl) and osmotic (e.g. in response to mannitol and PEG) stresses. This chain is Protein ALTERED SEED GERMINATION 2, found in Arabidopsis thaliana (Mouse-ear cress).